We begin with the raw amino-acid sequence, 378 residues long: MPTVASPLPLTTVGSENSSSIYDYDYLDDMTILVCRKDEVLSFGRVFLPVVYSLIFVLGLAGNLLLLVVLLHSAPRRRTMELYLLNLAVSNLLFVVTMPFWAISVAWHWVFGSFLCKVISTLYSINFYCGIFFITCMSLDKYLEIVHAQPLHRPKAQFRNLLLIVMVWITSLAISVPEMVFVQIHQTLDGVWHCYADFGGHATIWKLYLRFQLNLLGFLLPLLAMIFFYSRIGCVLVRLRPPGQGRALRMAAALVIVFFMLWFPYNLTLFLHSLLDLHVFGNCEISHRLDYTLQVTESLAFSHCCFTPVLYAFCSHRFRRYLKAFLSVMLRWHQAPGTPSSNHSESSRVTAQEDVVSMNDLGERQSEDSLNKGEMGNT.

Residues 1–49 (MPTVASPLPLTTVGSENSSSIYDYDYLDDMTILVCRKDEVLSFGRVFLP) lie on the Extracellular side of the membrane. The N-linked (GlcNAc...) asparagine glycan is linked to Asn-17. Residues 50–70 (VVYSLIFVLGLAGNLLLLVVL) form a helical membrane-spanning segment. Topologically, residues 71-91 (LHSAPRRRTMELYLLNLAVSN) are cytoplasmic. Residues 92–112 (LLFVVTMPFWAISVAWHWVFG) traverse the membrane as a helical segment. The Extracellular portion of the chain corresponds to 113 to 117 (SFLCK). Cys-116 and Cys-194 form a disulfide bridge. Residues 118–139 (VISTLYSINFYCGIFFITCMSL) form a helical membrane-spanning segment. Topologically, residues 140–161 (DKYLEIVHAQPLHRPKAQFRNL) are cytoplasmic. The chain crosses the membrane as a helical span at residues 162-182 (LLIVMVWITSLAISVPEMVFV). Over 183-216 (QIHQTLDGVWHCYADFGGHATIWKLYLRFQLNLL) the chain is Extracellular. The chain crosses the membrane as a helical span at residues 217-237 (GFLLPLLAMIFFYSRIGCVLV). The Cytoplasmic portion of the chain corresponds to 238–249 (RLRPPGQGRALR). Residues 250-270 (MAAALVIVFFMLWFPYNLTLF) form a helical membrane-spanning segment. At 271 to 292 (LHSLLDLHVFGNCEISHRLDYT) the chain is on the extracellular side. Residues 293–313 (LQVTESLAFSHCCFTPVLYAF) traverse the membrane as a helical segment. Residues 314–378 (CSHRFRRYLK…SLNKGEMGNT (65 aa)) lie on the Cytoplasmic side of the membrane. The tract at residues 326 to 378 (LSVMLRWHQAPGTPSSNHSESSRVTAQEDVVSMNDLGERQSEDSLNKGEMGNT) is C-terminal cytoplasmic tail.

This sequence belongs to the G-protein coupled receptor 1 family. Atypical chemokine receptor subfamily. Post-translationally, phosphorylated on serine residues in the C-terminal cytoplasmic tail. In terms of tissue distribution, expressed on apoptotic neutrophils (at protein level).

The protein resides in the early endosome. The protein localises to the recycling endosome. It localises to the cell membrane. Functionally, atypical chemokine receptor that controls chemokine levels and localization via high-affinity chemokine binding that is uncoupled from classic ligand-driven signal transduction cascades, resulting instead in chemokine sequestration, degradation, or transcytosis. Also known as interceptor (internalizing receptor) or chemokine-scavenging receptor or chemokine decoy receptor. Acts as a receptor for chemokines including CCL2, CCL3, CCL3L1, CCL4, CCL5, CCL7, CCL8, CCL11, CCL13, CCL17, CCL22, CCL23, CCL24, SCYA2/MCP-1, SCY3/MIP-1-alpha, SCYA5/RANTES and SCYA7/MCP-3. Upon active ligand stimulation, activates a beta-arrestin 1 (ARRB1)-dependent, G protein-independent signaling pathway that results in the phosphorylation of the actin-binding protein cofilin (CFL1) through a RAC1-PAK1-LIMK1 signaling pathway. Activation of this pathway results in up-regulation of ACKR2 from endosomal compartment to cell membrane, increasing its efficiency in chemokine uptake and degradation. By scavenging chemokines in tissues, on the surfaces of lymphatic vessels, and in placenta, plays an essential role in the resolution (termination) of the inflammatory response and in the regulation of adaptive immune responses. Plays a major role in the immune silencing of macrophages during the resolution of inflammation. Acts as a regulator of inflammatory leukocyte interactions with lymphatic endothelial cells (LECs) and is required for immature/mature dendritic cells discrimination by LECs. The protein is Atypical chemokine receptor 2 (Ackr2) of Mus musculus (Mouse).